We begin with the raw amino-acid sequence, 135 residues long: Poly [ADP-ribose] polymerase 1 (135 aa).

Residues Gln1–Lys21 form the PARP alpha-helical domain. A PARP catalytic domain is found at Asp30–Lys135. NAD(+)-binding positions include His104–Ser106, Gly113, and Arg120. Lys135 is an active-site residue.

It belongs to the ARTD/PARP family. In terms of assembly, homodimer; PARP-type zinc-fingers from separate parp1 molecules form a dimer module that specifically recognizes DNA strand breaks. Post-translationally, poly-ADP-ribosylated on serine, glutamate and aspartate residues by autocatalysis. Auto-ADP-ribosylation on serine takes place following interaction with HPF1. Auto poly-ADP-ribosylation on serine residues promotes its dissociation from chromatin.

It localises to the chromosome. Its subcellular location is the nucleus. It is found in the nucleolus. The protein resides in the cytoplasm. The protein localises to the cytosol. It carries out the reaction NAD(+) + (ADP-D-ribosyl)n-acceptor = nicotinamide + (ADP-D-ribosyl)n+1-acceptor + H(+).. The catalysed reaction is L-seryl-[protein] + NAD(+) = O-(ADP-D-ribosyl)-L-seryl-[protein] + nicotinamide + H(+). It catalyses the reaction L-aspartyl-[protein] + NAD(+) = 4-O-(ADP-D-ribosyl)-L-aspartyl-[protein] + nicotinamide. The enzyme catalyses L-glutamyl-[protein] + NAD(+) = 5-O-(ADP-D-ribosyl)-L-glutamyl-[protein] + nicotinamide. It carries out the reaction L-tyrosyl-[protein] + NAD(+) = O-(ADP-D-ribosyl)-L-tyrosyl-[protein] + nicotinamide + H(+). The catalysed reaction is L-histidyl-[protein] + NAD(+) = N(tele)-(ADP-D-ribosyl)-L-histidyl-[protein] + nicotinamide + H(+). With respect to regulation, ADP-ribosyltransferase activity is regulated via an allosteric activation mechanism. In absence of activation signal, parp1 is autoinhibited by the PARP alpha-helical domain (also named HD region), which prevents effective NAD(+)-binding. Activity is highly stimulated by signals, such as DNA strand breaks. Binding to damaged DNA unfolds the PARP alpha-helical domain, relieving autoinhibition. Poly-ADP-ribosyltransferase activity is tightly regulated and parp1 is removed from damaged chromatin following initial poly-ADP-ribosylation of chromatin to avoid prolonged residence (trapping) that has cytotoxic consequences. A number of factors or post-translational modifications (auto-poly-ADP-ribosylation) promote parp1 removal from chromatin. Poly-ADP-ribosyltransferase that mediates poly-ADP-ribosylation of proteins and plays a key role in DNA repair. Mediates glutamate, aspartate, serine, histidine or tyrosine ADP-ribosylation of proteins: the ADP-D-ribosyl group of NAD(+) is transferred to the acceptor carboxyl group of target residues and further ADP-ribosyl groups are transferred to the 2'-position of the terminal adenosine moiety, building up a polymer with an average chain length of 20-30 units. Serine ADP-ribosylation of proteins constitutes the primary form of ADP-ribosylation of proteins in response to DNA damage. Specificity for the different amino acids is conferred by interacting factors, such as hpf1 and nmnat1. Following interaction with hpf1, catalyzes serine ADP-ribosylation of target proteins; hpf1 confers serine specificity by completing the parp1 active site. Also catalyzes tyrosine ADP-ribosylation of target proteins following interaction with hpf1. Following interaction with nmnat1, catalyzes glutamate and aspartate ADP-ribosylation of target proteins; nmnat1 confers glutamate and aspartate specificity. Parp1 initiates the repair of DNA breaks: recognizes and binds DNA breaks within chromatin and recruits hpf1, licensing serine ADP-ribosylation of target proteins, such as histones (H2BS6ADPr and H3S10ADPr), thereby promoting decompaction of chromatin and the recruitment of repair factors leading to the reparation of DNA strand breaks. In addition to base excision repair (BER) pathway, also involved in double-strand breaks (DSBs) repair. Mediates the poly-ADP-ribosylation of a number of proteins. In addition to proteins, also able to ADP-ribosylate DNA: catalyzes ADP-ribosylation of DNA strand break termini containing terminal phosphates and a 2'-OH group in single- and double-stranded DNA, respectively. Parp1-mediated DNA repair in neurons plays a role in sleep: senses DNA damage in neurons and promotes sleep, facilitating efficient DNA repair. In addition to DNA repair, also involved in other processes, such as transcription regulation, programmed cell death, membrane repair, adipogenesis and innate immunity. Acts as a repressor of transcription: binds to nucleosomes and modulates chromatin structure in a manner similar to histone H1, thereby altering RNA polymerase II. Acts both as a positive and negative regulator of transcription elongation, depending on the context. Poly-ADP-ribose chains generated by parp1 also play a role in poly-ADP-ribose-dependent cell death, a process named parthanatos. Also acts as a negative regulator of the cGAS-STING pathway by mediating poly-ADP-ribosylation and inactivation of cgas. Acts as a negative regulator of adipogenesis by catalyzing poly ADP-ribosylation of histone H2B on 'Glu-35' (H2BE35ADPr). The polypeptide is Poly [ADP-ribose] polymerase 1 (parp1) (Oncorhynchus masou (Cherry salmon)).